We begin with the raw amino-acid sequence, 427 residues long: Tryptophan synthase beta chain 1 (427 aa).

Lys-107 carries the N6-(pyridoxal phosphate)lysine modification.

It belongs to the TrpB family. Tetramer of two alpha and two beta chains. Pyridoxal 5'-phosphate serves as cofactor.

It carries out the reaction (1S,2R)-1-C-(indol-3-yl)glycerol 3-phosphate + L-serine = D-glyceraldehyde 3-phosphate + L-tryptophan + H2O. It participates in amino-acid biosynthesis; L-tryptophan biosynthesis; L-tryptophan from chorismate: step 5/5. In terms of biological role, the beta subunit is responsible for the synthesis of L-tryptophan from indole and L-serine. In Aeropyrum pernix (strain ATCC 700893 / DSM 11879 / JCM 9820 / NBRC 100138 / K1), this protein is Tryptophan synthase beta chain 1 (trpB1).